Reading from the N-terminus, the 148-residue chain is FAD synthase (148 aa).

Residues 14-15 (TF), 19-22 (HPGH), and Asp-97 contribute to the ATP site.

It belongs to the archaeal FAD synthase family. As to quaternary structure, homodimer. Requires a divalent metal cation as cofactor.

The catalysed reaction is FMN + ATP + H(+) = FAD + diphosphate. It functions in the pathway cofactor biosynthesis; FAD biosynthesis; FAD from FMN: step 1/1. In terms of biological role, catalyzes the transfer of the AMP portion of ATP to flavin mononucleotide (FMN) to produce flavin adenine dinucleotide (FAD) coenzyme. The sequence is that of FAD synthase from Natrialba magadii (strain ATCC 43099 / DSM 3394 / CCM 3739 / CIP 104546 / IAM 13178 / JCM 8861 / NBRC 102185 / NCIMB 2190 / MS3) (Natronobacterium magadii).